A 354-amino-acid polypeptide reads, in one-letter code: Chorismate synthase (354 aa).

Residue arginine 48 participates in NADP(+) binding. Residues 126-128 (RAS), alanine 278, 293-297 (KPIPS), and arginine 319 contribute to the FMN site.

It belongs to the chorismate synthase family. In terms of assembly, homotetramer. FMNH2 serves as cofactor.

It catalyses the reaction 5-O-(1-carboxyvinyl)-3-phosphoshikimate = chorismate + phosphate. Its pathway is metabolic intermediate biosynthesis; chorismate biosynthesis; chorismate from D-erythrose 4-phosphate and phosphoenolpyruvate: step 7/7. Catalyzes the anti-1,4-elimination of the C-3 phosphate and the C-6 proR hydrogen from 5-enolpyruvylshikimate-3-phosphate (EPSP) to yield chorismate, which is the branch point compound that serves as the starting substrate for the three terminal pathways of aromatic amino acid biosynthesis. This reaction introduces a second double bond into the aromatic ring system. This Desulfosudis oleivorans (strain DSM 6200 / JCM 39069 / Hxd3) (Desulfococcus oleovorans) protein is Chorismate synthase.